The following is a 265-amino-acid chain: H-2 class II histocompatibility antigen, A-D beta chain (265 aa).

The N-terminal stretch at 1 to 27 is a signal peptide; the sequence is MALQIPSLLLSAAVVVLMVLSSPRTEG. The interval 28–122 is beta-1; sequence GNSERHFVVQ…PETSTSLRRL (95 aa). Residues 28-226 lie on the Extracellular side of the membrane; the sequence is GNSERHFVVQ…RAQSESARSK (199 aa). Disulfide bonds link Cys-42–Cys-106 and Cys-145–Cys-201. Asn-46 carries N-linked (GlcNAc...) asparagine glycosylation. The tract at residues 123–216 is beta-2; that stretch reads EQPNVAISLS…SLKSPITVEW (94 aa). The 89-residue stretch at 125–213 folds into the Ig-like C1-type domain; sequence PNVAISLSRT…EHPSLKSPIT (89 aa). The interval 217-226 is connecting peptide; it reads RAQSESARSK. The helical transmembrane segment at 227–247 threads the bilayer; it reads MLSGIGGCVLGVIFLGLGLFI. The Cytoplasmic portion of the chain corresponds to 248-265; it reads RHRSQKGPRGPPPAGLLQ.

Belongs to the MHC class II family. Post-translationally, ubiquitinated in immature dendritic cells leading to down-regulation of MHC class II.

Its subcellular location is the membrane. The polypeptide is H-2 class II histocompatibility antigen, A-D beta chain (H2-Ab1) (Mus musculus (Mouse)).